The primary structure comprises 404 residues: Phosphopentomutase (404 aa).

Positions 10, 303, 308, 344, 345, and 356 each coordinate Mn(2+).

The protein belongs to the phosphopentomutase family. Mn(2+) serves as cofactor.

The protein resides in the cytoplasm. It carries out the reaction 2-deoxy-alpha-D-ribose 1-phosphate = 2-deoxy-D-ribose 5-phosphate. The catalysed reaction is alpha-D-ribose 1-phosphate = D-ribose 5-phosphate. Its pathway is carbohydrate degradation; 2-deoxy-D-ribose 1-phosphate degradation; D-glyceraldehyde 3-phosphate and acetaldehyde from 2-deoxy-alpha-D-ribose 1-phosphate: step 1/2. In terms of biological role, isomerase that catalyzes the conversion of deoxy-ribose 1-phosphate (dRib-1-P) and ribose 1-phosphate (Rib-1-P) to deoxy-ribose 5-phosphate (dRib-5-P) and ribose 5-phosphate (Rib-5-P), respectively. This chain is Phosphopentomutase, found in Shewanella baltica (strain OS223).